Here is a 483-residue protein sequence, read N- to C-terminus: Probable cytosol aminopeptidase (483 aa).

Positions 252 and 257 each coordinate Mn(2+). K264 is a catalytic residue. 3 residues coordinate Mn(2+): D275, D334, and E336. Residue R338 is part of the active site.

This sequence belongs to the peptidase M17 family. Mn(2+) serves as cofactor.

It localises to the cytoplasm. The enzyme catalyses Release of an N-terminal amino acid, Xaa-|-Yaa-, in which Xaa is preferably Leu, but may be other amino acids including Pro although not Arg or Lys, and Yaa may be Pro. Amino acid amides and methyl esters are also readily hydrolyzed, but rates on arylamides are exceedingly low.. It catalyses the reaction Release of an N-terminal amino acid, preferentially leucine, but not glutamic or aspartic acids.. In terms of biological role, presumably involved in the processing and regular turnover of intracellular proteins. Catalyzes the removal of unsubstituted N-terminal amino acids from various peptides. This Legionella pneumophila (strain Paris) protein is Probable cytosol aminopeptidase.